A 535-amino-acid chain; its full sequence is PAC-1 interacting and coiled-coil domain-containing protein 1 (535 aa).

Positions 1–67 (MIITTPRRAN…KQTPPRSPVI (67 aa)) are disordered. Residues 36 to 57 (SSTTPSSIGSSSSSSSSYASST) show a composition bias toward low complexity. 2 coiled-coil regions span residues 109–172 (KLQY…RDLS) and 198–242 (SLMK…RQSL). 2 disordered regions span residues 254–277 (NESE…NDEE) and 503–535 (TCRP…HTHN). Polar residues predominate over residues 503-525 (TCRPTTTLISSTQPAQRSVSVEK). Positions 526 to 535 (NNNNNVHTHN) are enriched in low complexity.

The protein belongs to the CCDC85 family. Interacts with pac-1 and jac-1.

It localises to the cell junction. The protein resides in the adherens junction. Its function is as follows. Linker protein which helps to recruit the Rho GTPase-activating protein, pac-1, to adherens junctions. The protein is PAC-1 interacting and coiled-coil domain-containing protein 1 of Caenorhabditis elegans.